The chain runs to 274 residues: uncharacterized protein (274 aa).

Residues 1–30 (MTVYTPTSERQAPATTHRQMWALGDYAAIA) form the signal peptide.

To M.tuberculosis Rv1405c.

This is an uncharacterized protein from Mycobacterium tuberculosis (strain CDC 1551 / Oshkosh).